A 365-amino-acid chain; its full sequence is Phosphatidylcholine:ceramide cholinephosphotransferase 2 (365 aa).

The disordered stretch occupies residues 9-50; the sequence is LEGHLESQTNDSTNTYTSPTEAVEEEGKNGKGKPKTLSNGLR. Positions 14-28 are enriched in polar residues; the sequence is ESQTNDSTNTYTSPT. Transmembrane regions (helical) follow at residues 80 to 100, 128 to 148, 159 to 179, 219 to 239, and 248 to 268; these read GIAF…ITVV, FSVS…QWLF, FFFI…VTTL, ILCG…TYLF, and FWWY…CILV. The active site involves His-229. Catalysis depends on residues His-272 and Asp-276. A helical membrane pass occupies residues 273–290; the sequence is YTVDVIIAYYITTRLFWW. Residues 291-365 are Cytoplasmic-facing; that stretch reads YHSMANEKNL…KIGEDNEKST (75 aa). Residues Cys-331, Cys-332, Cys-343, and Cys-348 are each lipidated (S-palmitoyl cysteine).

This sequence belongs to the sphingomyelin synthase family. In terms of processing, palmitoylated on Cys-331, Cys-332, Cys-343 and Cys-348; which plays an important role in plasma membrane localization. As to expression, highest expression is detected in cortical bone, followed by vertebrae, kidney and liver. Expression levels are very low in spleen, muscle, heart, brown fat and thymus. Expressed in macrophages.

Its subcellular location is the cell membrane. It is found in the golgi apparatus membrane. It catalyses the reaction an N-acylsphing-4-enine + a 1,2-diacyl-sn-glycero-3-phosphocholine = a sphingomyelin + a 1,2-diacyl-sn-glycerol. The enzyme catalyses an N-acylsphinganine + a 1,2-diacyl-sn-glycero-3-phosphocholine = an N-acylsphinganine-1-phosphocholine + a 1,2-diacyl-sn-glycerol. It carries out the reaction an N-acyl-(4R)-4-hydroxysphinganine + a 1,2-diacyl-sn-glycero-3-phosphocholine = an N-acyl-(4R)-4-hydroxysphinganine-phosphocholine + a 1,2-diacyl-sn-glycerol. The catalysed reaction is an N-acylsphing-4-enine + a 1,2-diacyl-sn-glycero-3-phosphoethanolamine = an N-acylsphing-4-enine 1-phosphoethanolamine + a 1,2-diacyl-sn-glycerol. It catalyses the reaction an N-acylsphinganine + a 1,2-diacyl-sn-glycero-3-phosphoethanolamine = an N-acylsphinganine-1-phosphoethanolamine + a 1,2-diacyl-sn-glycerol. The enzyme catalyses an N-acyl-(4R)-4-hydroxysphinganine + a 1,2-diacyl-sn-glycero-3-phosphoethanolamine = an N-acyl-(4R)-4-hydroxysphinganine-1-phosphoethanolamine + a 1,2-diacyl-sn-glycerol. It carries out the reaction 1,2-dihexadecanoyl-sn-glycero-3-phosphocholine + an N-acylsphing-4-enine = 1,2-dihexadecanoyl-sn-glycerol + a sphingomyelin. The catalysed reaction is 1-(9Z-octadecenoyl)-2-acyl-sn-3-glycerol + a sphingomyelin = a 1-(9Z-octadecenoyl)-2-acyl-sn-glycero-3-phosphocholine + an N-acylsphing-4-enine. It catalyses the reaction N-hexadecanoylsphinganine + a 1,2-diacyl-sn-glycero-3-phosphocholine = N-hexadecanoyl-sphinganine-1-phosphocholine + a 1,2-diacyl-sn-glycerol. The enzyme catalyses N-hexadecanoyl-(4R)-hydroxysphinganine + a 1,2-diacyl-sn-glycero-3-phosphocholine = N-hexadecanoyl-(4R)-hydroxysphinganine-phosphocholine + a 1,2-diacyl-sn-glycerol. It carries out the reaction N-hexadecanoylsphinganine + a 1,2-diacyl-sn-glycero-3-phosphoethanolamine = N-hexadecanoyl-sphinganine-1-phosphoethanolamine + a 1,2-diacyl-sn-glycerol. The catalysed reaction is N-hexadecanoyl-(4R)-hydroxysphinganine + a 1,2-diacyl-sn-glycero-3-phosphoethanolamine = N-hexadecanoyl-(4R)-hydroxysphinganine-1-phosphoethanolamine + a 1,2-diacyl-sn-glycerol. It participates in sphingolipid metabolism. Functionally, sphingomyelin synthase that primarily contributes to sphingomyelin synthesis and homeostasis at the plasma membrane. Catalyzes the reversible transfer of phosphocholine moiety in sphingomyelin biosynthesis: in the forward reaction transfers phosphocholine head group of phosphatidylcholine (PC) on to ceramide (CER) to form ceramide phosphocholine (sphingomyelin, SM) and diacylglycerol (DAG) as by-product, and in the reverse reaction transfers phosphocholine from SM to DAG to form PC and CER. The direction of the reaction appears to depend on the levels of CER and DAG in the plasma membrane. Does not use free phosphorylcholine or CDP-choline as donors. Can also transfer phosphoethanolamine head group of phosphatidylethanolamine (PE) on to ceramide (CER) to form ceramide phosphoethanolamine (CPE). Regulates receptor-mediated signal transduction via mitogenic DAG and proapoptotic CER, as well as via SM, a structural component of membrane rafts that serve as platforms for signal transduction and protein sorting. To a lesser extent, plays a role in secretory transport via regulation of DAG pool at the Golgi apparatus and its downstream effects on PRKD1. Required for normal bone matrix mineralization. This is Phosphatidylcholine:ceramide cholinephosphotransferase 2 (Sgms2) from Mus musculus (Mouse).